The chain runs to 320 residues: Malate dehydrogenase (320 aa).

Residues 10–15 and Asp34 each bind NAD(+); that span reads GAGQIG. Substrate contacts are provided by Arg83 and Arg89. Residues Asn96 and 119-121 each bind NAD(+); that span reads ITN. Residues Asn121 and Arg152 each contribute to the substrate site. His176 functions as the Proton acceptor in the catalytic mechanism.

The protein belongs to the LDH/MDH superfamily. MDH type 3 family.

The enzyme catalyses (S)-malate + NAD(+) = oxaloacetate + NADH + H(+). Its function is as follows. Catalyzes the reversible oxidation of malate to oxaloacetate. The sequence is that of Malate dehydrogenase from Methylobacterium sp. (strain 4-46).